Reading from the N-terminus, the 58-residue chain is ATP synthase F(0) complex subunit k, mitochondrial (58 aa).

Lysine 16 and lysine 17 each carry N6-acetyllysine. The helical transmembrane segment at 23–45 (TLTGRMNCVLATYGGIALLVLYF) threads the bilayer.

In terms of assembly, component of the ATP synthase complex composed at least of ATP5F1A/subunit alpha, ATP5F1B/subunit beta, ATP5MC1/subunit c (homooctomer), MT-ATP6/subunit a, MT-ATP8/subunit 8, ATP5ME/subunit e, ATP5MF/subunit f, ATP5MG/subunit g, ATP5MK/subunit k, ATP5MJ/subunit j, ATP5F1C/subunit gamma, ATP5F1D/subunit delta, ATP5F1E/subunit epsilon, ATP5PF/subunit F6, ATP5PB/subunit b, ATP5PD/subunit d, ATP5PO/subunit OSCP. ATP synthase complex consists of a soluble F(1) head domain (subunits alpha(3) and beta(3)) - the catalytic core - and a membrane F(0) domain - the membrane proton channel (subunits c, a, 8, e, f, g, k and j). These two domains are linked by a central stalk (subunits gamma, delta, and epsilon) rotating inside the F1 region and a stationary peripheral stalk (subunits F6, b, d, and OSCP). The ATP synthase complex/complex V exists as a monomeric and a dimeric supercomplex that helps shape mitochondrial cristae to optimize proton flow.

It is found in the mitochondrion membrane. In terms of biological role, subunit k, of the mitochondrial membrane ATP synthase complex (F(1)F(0) ATP synthase or Complex V) that produces ATP from ADP in the presence of a proton gradient across the membrane which is generated by electron transport complexes of the respiratory chain. ATP synthase complex consist of a soluble F(1) head domain - the catalytic core - and a membrane F(1) domain - the membrane proton channel. These two domains are linked by a central stalk rotating inside the F(1) region and a stationary peripheral stalk. During catalysis, ATP synthesis in the catalytic domain of F(1) is coupled via a rotary mechanism of the central stalk subunits to proton translocation. In vivo, can only synthesize ATP although its ATP hydrolase activity can be activated artificially in vitro. Part of the complex F(0) domain. Required for dimerization of the ATP synthase complex and as such regulates ATP synthesis in the mitochondria. This chain is ATP synthase F(0) complex subunit k, mitochondrial, found in Mus musculus (Mouse).